We begin with the raw amino-acid sequence, 124 residues long: Small ribosomal subunit protein uS12 (124 aa).

The segment at 1–25 (MARINQLVRKPRRARAKKSDVPALE) is disordered. Aspartate 89 is modified (3-methylthioaspartic acid). The disordered stretch occupies residues 103-124 (DTAGVSGRRRGRSKYGEKKPKE).

This sequence belongs to the universal ribosomal protein uS12 family. Part of the 30S ribosomal subunit. Contacts proteins S8 and S17. May interact with IF1 in the 30S initiation complex.

With S4 and S5 plays an important role in translational accuracy. In terms of biological role, interacts with and stabilizes bases of the 16S rRNA that are involved in tRNA selection in the A site and with the mRNA backbone. Located at the interface of the 30S and 50S subunits, it traverses the body of the 30S subunit contacting proteins on the other side and probably holding the rRNA structure together. The combined cluster of proteins S8, S12 and S17 appears to hold together the shoulder and platform of the 30S subunit. The protein is Small ribosomal subunit protein uS12 of Coxiella burnetii (strain Dugway 5J108-111).